Reading from the N-terminus, the 429-residue chain is Uterine milk protein (429 aa).

The signal sequence occupies residues 1-25 (MSHRRMQLALSLVFILCGLFNSIFC). N222 and N268 each carry an N-linked (GlcNAc...) asparagine glycan.

The protein belongs to the serpin family. UTMP subfamily. Glycosylated; carries the so-called mannose 6-phosphate lysosomal recognition marker on its carbohydrate chains. As to expression, secreted by ovine endometrium under the influence of progesterone.

This is Uterine milk protein from Ovis aries (Sheep).